The chain runs to 359 residues: UDP-N-acetylglucosamine--N-acetylmuramyl-(pentapeptide) pyrophosphoryl-undecaprenol N-acetylglucosamine transferase (359 aa).

Residues 15-17, Asn127, Arg166, Ser191, Ile245, 264-269, and Gln290 contribute to the UDP-N-acetyl-alpha-D-glucosamine site; these read TGG and ALTVSE.

It belongs to the glycosyltransferase 28 family. MurG subfamily.

The protein localises to the cell inner membrane. It carries out the reaction di-trans,octa-cis-undecaprenyl diphospho-N-acetyl-alpha-D-muramoyl-L-alanyl-D-glutamyl-meso-2,6-diaminopimeloyl-D-alanyl-D-alanine + UDP-N-acetyl-alpha-D-glucosamine = di-trans,octa-cis-undecaprenyl diphospho-[N-acetyl-alpha-D-glucosaminyl-(1-&gt;4)]-N-acetyl-alpha-D-muramoyl-L-alanyl-D-glutamyl-meso-2,6-diaminopimeloyl-D-alanyl-D-alanine + UDP + H(+). It participates in cell wall biogenesis; peptidoglycan biosynthesis. In terms of biological role, cell wall formation. Catalyzes the transfer of a GlcNAc subunit on undecaprenyl-pyrophosphoryl-MurNAc-pentapeptide (lipid intermediate I) to form undecaprenyl-pyrophosphoryl-MurNAc-(pentapeptide)GlcNAc (lipid intermediate II). This chain is UDP-N-acetylglucosamine--N-acetylmuramyl-(pentapeptide) pyrophosphoryl-undecaprenol N-acetylglucosamine transferase, found in Pseudomonas putida (strain ATCC 700007 / DSM 6899 / JCM 31910 / BCRC 17059 / LMG 24140 / F1).